The following is a 302-amino-acid chain: 4-hydroxy-tetrahydrodipicolinate synthase (302 aa).

Threonine 56 provides a ligand contact to pyruvate. Catalysis depends on tyrosine 145, which acts as the Proton donor/acceptor. The active-site Schiff-base intermediate with substrate is lysine 173. Valine 215 is a binding site for pyruvate.

The protein belongs to the DapA family. In terms of assembly, homotetramer; dimer of dimers.

Its subcellular location is the cytoplasm. The enzyme catalyses L-aspartate 4-semialdehyde + pyruvate = (2S,4S)-4-hydroxy-2,3,4,5-tetrahydrodipicolinate + H2O + H(+). The protein operates within amino-acid biosynthesis; L-lysine biosynthesis via DAP pathway; (S)-tetrahydrodipicolinate from L-aspartate: step 3/4. In terms of biological role, catalyzes the condensation of (S)-aspartate-beta-semialdehyde [(S)-ASA] and pyruvate to 4-hydroxy-tetrahydrodipicolinate (HTPA). This chain is 4-hydroxy-tetrahydrodipicolinate synthase, found in Prochlorococcus marinus (strain MIT 9515).